The primary structure comprises 380 residues: 3-dehydroquinate synthase (380 aa).

It belongs to the archaeal-type DHQ synthase family.

The enzyme catalyses 2-amino-2,3,7-trideoxy-D-lyxo-hept-6-ulosonate + NAD(+) + H2O = 3-dehydroquinate + NH4(+) + NADH + H(+). Functionally, catalyzes the oxidative deamination and cyclization of 2-amino-3,7-dideoxy-D-threo-hept-6-ulosonic acid (ADH) to yield 3-dehydroquinate (DHQ), which is fed into the canonical shikimic pathway of aromatic amino acid biosynthesis. The sequence is that of 3-dehydroquinate synthase from Methanosarcina barkeri (strain Fusaro / DSM 804).